The sequence spans 185 residues: Ribosome-recycling factor (185 aa).

Belongs to the RRF family.

The protein localises to the cytoplasm. Functionally, responsible for the release of ribosomes from messenger RNA at the termination of protein biosynthesis. May increase the efficiency of translation by recycling ribosomes from one round of translation to another. The protein is Ribosome-recycling factor of Campylobacter jejuni subsp. jejuni serotype O:23/36 (strain 81-176).